The sequence spans 166 residues: 3-isopropylmalate dehydratase small subunit (166 aa).

It belongs to the LeuD family. LeuD type 2 subfamily. As to quaternary structure, heterodimer of LeuC and LeuD.

The enzyme catalyses (2R,3S)-3-isopropylmalate = (2S)-2-isopropylmalate. It participates in amino-acid biosynthesis; L-leucine biosynthesis; L-leucine from 3-methyl-2-oxobutanoate: step 2/4. In terms of biological role, catalyzes the isomerization between 2-isopropylmalate and 3-isopropylmalate, via the formation of 2-isopropylmaleate. The protein is 3-isopropylmalate dehydratase small subunit of Moorella thermoacetica (strain ATCC 39073 / JCM 9320).